The sequence spans 315 residues: Calumenin (315 aa).

Positions 1–19 (MDLRQFLMCLSLCTAFALS) are cleaved as a signal peptide. At S44 the chain carries Phosphoserine. The residue at position 47 (Y47) is a Phosphotyrosine. A Phosphothreonine modification is found at T65. EF-hand domains follow at residues 68 to 103 (ESKERLGMIVDKIDADKDGFVTEGELKSWIKHAQKK), 104 to 139 (YIYDNVENQWQEFDLNQDGLISWDEYRNVTYGTYLD), 151 to 186 (QMMVRDERRFKMADKDGDLIATKEEFTAFLHPEEYD), 188 to 223 (MKDIVVQEPMEDIDKNADGFIDLEEYIGDMYSHDGN), 229 to 264 (WVKTEREQFVEFRDKNRDGKMDKEETKDWILPSDYD), and 265 to 300 (HAEAEARHLVYESDQNKDGKLTKEEIVDKYDLFVGS). Position 69 is a phosphoserine (S69). Ca(2+)-binding residues include D81, D83, D85, E92, D117, N119, D121, and E128. N131 carries N-linked (GlcNAc...) asparagine glycosylation. A Ca(2+)-binding site is contributed by D164. K165 bears the N6-acetyllysine mark. D166, D168, E175, D201, N203, D205, E212, D242, N244, D246, K248, and E253 together coordinate Ca(2+). T254 carries the phosphothreonine modification. S261 and S277 each carry phosphoserine. Ca(2+)-binding residues include D278, N280, D282, K284, and E289. Positions 312–315 (HDEF) match the Prevents secretion from ER motif.

The protein belongs to the CREC family. In terms of assembly, interacts with GGCX.

It localises to the endoplasmic reticulum membrane. Its subcellular location is the golgi apparatus. The protein resides in the secreted. It is found in the melanosome. The protein localises to the sarcoplasmic reticulum lumen. Its function is as follows. Involved in regulation of vitamin K-dependent carboxylation of multiple N-terminal glutamate residues. Seems to inhibit gamma-carboxylase GGCX. Binds 7 calcium ions with a low affinity. In Bos taurus (Bovine), this protein is Calumenin (CALU).